The chain runs to 544 residues: Terpene synthase 9 (544 aa).

Mg(2+) is bound by residues aspartate 296, aspartate 300, and glutamate 449. A DDXXD motif motif is present at residues 296-300; the sequence is DDTFD.

It belongs to the terpene synthase family. Tpsa subfamily. Requires Mg(2+) as cofactor. Mn(2+) is required as a cofactor.

It carries out the reaction (2E,6E)-farnesyl diphosphate = (1E,4E)-germacrene B + diphosphate. The catalysed reaction is (2E)-geranyl diphosphate = terpinolene + diphosphate. It catalyses the reaction (2E)-geranyl diphosphate = limonene + diphosphate. The enzyme catalyses (2E)-geranyl diphosphate = beta-myrcene + diphosphate. It carries out the reaction (2Z,6Z)-farnesyl diphosphate = germacrene A + diphosphate. The catalysed reaction is (2Z,6Z)-farnesyl diphosphate = alpha-humulene + diphosphate. The protein operates within secondary metabolite biosynthesis; terpenoid biosynthesis. In terms of biological role, sesquiterpene synthase involved in the biosynthesis of volatile compounds. Mediates the conversion of (2E,6E)-farnesyl diphosphate (FPP) into (1E,4E)-germacrene B, but also smaller amounts of germacrene A and C, and of (2Z,6Z)-farnesyl diphosphate ((ZZ)-FPP) into alpha-humulene, germacrene A and germacrene B. Can act with a low efficiency as a monoterpene synthase with geranyl diphosphate (GPP) as substrate, thus producing beta-myrcene, limonene and terpinolene. In Solanum habrochaites (Wild tomato), this protein is Terpene synthase 9.